The sequence spans 228 residues: Urease accessory protein UreF (228 aa).

The protein belongs to the UreF family. As to quaternary structure, ureD, UreF and UreG form a complex that acts as a GTP-hydrolysis-dependent molecular chaperone, activating the urease apoprotein by helping to assemble the nickel containing metallocenter of UreC. The UreE protein probably delivers the nickel.

The protein localises to the cytoplasm. Functionally, required for maturation of urease via the functional incorporation of the urease nickel metallocenter. The chain is Urease accessory protein UreF from Yersinia pestis bv. Antiqua (strain Antiqua).